Consider the following 290-residue polypeptide: MAAVEKRRQAVPPPAGFTDSGRQSVSRAAGAAESEEDFLRQVGVTEMLRAALLKVLEARPEEPIAFLAHYFENMGLRSPVNGGAGEPPGQLLLQQQRLGRALWHLRLAHHSQRAAFNNNVSVAYECLSAGGRRKRPGLDGRTYSELLRRICRDGQAPEEVVAPLLRKVQCRDHEAVPLSVFRAGTLTCFVLLEFVARAGALFQLLEDSAAAVADRRVGQAVLDTLEGALQASDAAAPARFLEAGSRLGPDSLALALDRAVGGRRPSAPMTREEFLERAAALFIAKVKPVG.

Positions 1 to 30 (MAAVEKRRQAVPPPAGFTDSGRQSVSRAAG) are disordered. Ser-34 and Ser-266 each carry phosphoserine.

In terms of assembly, part of the neuronal tubulin polyglutamylase complex which contains TPGS1, TPGS2, TTLL1, LRRC49 and NICN1. Interacts with PCM1, CSTPP1 and LRRC49.

It is found in the cytoplasm. The protein resides in the cytoskeleton. Its subcellular location is the cilium axoneme. It localises to the flagellum axoneme. The protein localises to the cilium basal body. It is found in the flagellum basal body. The protein resides in the cell projection. Its subcellular location is the axon. It localises to the dendrite. The protein localises to the microtubule organizing center. It is found in the centrosome. The protein resides in the centriolar satellite. Its function is as follows. Subunit of the tubulin polyglutamylase complex (TPGC). The complex mediates cilia and flagella polyglutamylation which is essential for their biogenesis and motility. May act in the targeting of the tubulin polyglutamylase complex. Required for the development of the spermatid flagellum. The sequence is that of Tubulin polyglutamylase complex subunit 1 from Homo sapiens (Human).